A 420-amino-acid polypeptide reads, in one-letter code: MKLLVVGSGGREHAIAKKLLESKDVEKVFVAPGNDGMTLDGLELVNISISEHSKLIDFAKTNDVAWTFIGPDDALAAGIVDDFNQAGLKAFGPTRAAAELEWSKDFAKEIMVKYGVSTAAYGTFSDFEEAKAYIEKHGAPIVVKADGLALGKGVVVAETVEQAVEAAHEMLLDNKFGDSGARVVIEEFLEGEEFSLFAFVNGDKFYIMPTAQDHKRAYDGDKGPNTGGMGAYAPVPHLPQSVVDTAVDTIVKPVLEGIIKEGRPYLGVIYAGLILTADGPKVIEFNSRFGDPETQIILPRLTSDFAQNITDILDGKEPNIMWTDKGVTLGVVVASKGYPLDYERGVELPAKTEGDVITYYAGAKFAENSRALLSNGGRVYMLVTTADTVKEAQASIYQELSQQKIEGLFYRTDIGSKAIK.

An ATP-grasp domain is found at 108 to 314 (KEIMVKYGVS…FAQNITDILD (207 aa)). 134–195 (IEKHGAPIVV…EEFLEGEEFS (62 aa)) is a binding site for ATP. The Mg(2+) site is built by glutamate 284 and asparagine 286.

It belongs to the GARS family. Mg(2+) serves as cofactor. It depends on Mn(2+) as a cofactor.

It carries out the reaction 5-phospho-beta-D-ribosylamine + glycine + ATP = N(1)-(5-phospho-beta-D-ribosyl)glycinamide + ADP + phosphate + H(+). It participates in purine metabolism; IMP biosynthesis via de novo pathway; N(1)-(5-phospho-D-ribosyl)glycinamide from 5-phospho-alpha-D-ribose 1-diphosphate: step 2/2. The protein is Phosphoribosylamine--glycine ligase of Streptococcus pneumoniae (strain ATCC BAA-255 / R6).